The chain runs to 366 residues: Histidinol-phosphate aminotransferase 2 (366 aa).

Lysine 226 bears the N6-(pyridoxal phosphate)lysine mark.

This sequence belongs to the class-II pyridoxal-phosphate-dependent aminotransferase family. Histidinol-phosphate aminotransferase subfamily. In terms of assembly, homodimer. Pyridoxal 5'-phosphate is required as a cofactor.

It carries out the reaction L-histidinol phosphate + 2-oxoglutarate = 3-(imidazol-4-yl)-2-oxopropyl phosphate + L-glutamate. Its pathway is amino-acid biosynthesis; L-histidine biosynthesis; L-histidine from 5-phospho-alpha-D-ribose 1-diphosphate: step 7/9. This is Histidinol-phosphate aminotransferase 2 from Haemophilus influenzae (strain 86-028NP).